A 1316-amino-acid chain; its full sequence is DNA-directed RNA polymerase subunit beta' (1316 aa).

Residues cysteine 60, cysteine 62, cysteine 75, and cysteine 78 each contribute to the Zn(2+) site. Mg(2+) is bound by residues aspartate 535, aspartate 537, and aspartate 539. Zn(2+) is bound by residues cysteine 891, cysteine 968, cysteine 975, and cysteine 978.

Belongs to the RNA polymerase beta' chain family. As to quaternary structure, the RNAP catalytic core consists of 2 alpha, 1 beta, 1 beta' and 1 omega subunit. When a sigma factor is associated with the core the holoenzyme is formed, which can initiate transcription. It depends on Mg(2+) as a cofactor. Zn(2+) serves as cofactor.

It catalyses the reaction RNA(n) + a ribonucleoside 5'-triphosphate = RNA(n+1) + diphosphate. DNA-dependent RNA polymerase catalyzes the transcription of DNA into RNA using the four ribonucleoside triphosphates as substrates. The polypeptide is DNA-directed RNA polymerase subunit beta' (Mycobacterium tuberculosis (strain CDC 1551 / Oshkosh)).